We begin with the raw amino-acid sequence, 553 residues long: Coiled-coil domain-containing protein 22 homolog (553 aa).

Coiled-coil stretches lie at residues 261 to 404 (LEEL…TATQ) and 498 to 553 (NVTK…VAKA).

The protein belongs to the CCDC22 family.

The protein is Coiled-coil domain-containing protein 22 homolog of Drosophila pseudoobscura pseudoobscura (Fruit fly).